The following is a 504-amino-acid chain: Tyrosine-protein kinase HCK (504 aa).

A lipid anchor (N-myristoyl glycine) is attached at G2. Residue C3 is the site of S-palmitoyl cysteine attachment. T15 is subject to Phosphothreonine. At Y30 the chain carries Phosphotyrosine. Residues 34–49 are compositionally biased toward polar residues; it reads PTSTIKPGPNSNNRNT. The tract at residues 34–53 is disordered; sequence PTSTIKPGPNSNNRNTPGIG. Positions 56 to 116 constitute an SH3 domain; that stretch reads SEDIIVVALY…PSNYVARVDS (61 aa). The SH2 domain occupies 122-219; the sequence is WFFKGISRKD…GLCQKLSVPC (98 aa). T180 bears the Phosphothreonine mark. The residue at position 187 (Y187) is a Phosphotyrosine. Positions 240–493 constitute a Protein kinase domain; that stretch reads LKLEKKLGAG…YIQSVLDDFY (254 aa). ATP contacts are provided by residues 246 to 254 and K268; that span reads LGAGQFGEV. The Proton acceptor role is filled by D359. Position 389 is a phosphotyrosine; by autocatalysis (Y389). Residue S440 is modified to Phosphoserine. Y500 carries the post-translational modification Phosphotyrosine.

Belongs to the protein kinase superfamily. Tyr protein kinase family. SRC subfamily. Interacts with ADAM15. Interacts with FASLG. Interacts with ARRB1 and ARRB2. Interacts with FCGR1A; the interaction may be indirect. Interacts with IL6ST. Interacts (via SH3 domain) with ELMO1. Interacts (via SH3 domain) with TP73. Interacts with YAP1. Interacts with ABL1 and ITGB1, and thereby recruits ABL1 to activated ITGB1. Interacts (via SH2 domain) with FLT3 (tyrosine phosphorylated). Interacts with CBL. Interacts with VAV1, WAS and RAPGEF1. Interacts (via SH3 domain) with WDCP. Phosphorylated on several tyrosine residues. Autophosphorylated. Becomes rapidly phosphorylated upon activation of the immunoglobulin receptors FCGR1A and FCGR2A. Phosphorylation at Tyr-389 increases kinase activity. Phosphorylation at Tyr-500 inhibits kinase activity. Kinase activity is not required for phosphorylation at Tyr-500, suggesting that this site may be a target of other kinases. Post-translationally, ubiquitinated by CBL, leading to its degradation via the proteasome. In terms of processing, palmitoylation requires prior myristoylation. Palmitoylation is required for caveolar localization.

The protein resides in the cytoplasmic vesicle. It is found in the secretory vesicle. The protein localises to the cytoplasm. Its subcellular location is the cytosol. It localises to the cell membrane. The protein resides in the membrane. It is found in the caveola. The protein localises to the cell junction. Its subcellular location is the focal adhesion. It localises to the cytoskeleton. The protein resides in the golgi apparatus. It is found in the lysosome. The protein localises to the nucleus. It carries out the reaction L-tyrosyl-[protein] + ATP = O-phospho-L-tyrosyl-[protein] + ADP + H(+). Its activity is regulated as follows. Subject to autoinhibition, mediated by intramolecular interactions involving the SH2 and SH3 domains. Kinase activity is also regulated by phosphorylation at regulatory tyrosine residues. Phosphorylation at Tyr-389 is required for optimal activity. Phosphorylation at Tyr-500 inhibits kinase activity. In terms of biological role, non-receptor tyrosine-protein kinase found in hematopoietic cells that transmits signals from cell surface receptors and plays an important role in the regulation of innate immune responses, including neutrophil, monocyte, macrophage and mast cell functions, phagocytosis, cell survival and proliferation, cell adhesion and migration. Acts downstream of receptors that bind the Fc region of immunoglobulins, such as FCGR1A and FCGR2A, but also CSF3R, PLAUR, the receptors for IFNG, IL2, IL6 and IL8, and integrins, such as ITGB1 and ITGB2. During the phagocytic process, mediates mobilization of secretory lysosomes, degranulation, and activation of NADPH oxidase to bring about the respiratory burst. Plays a role in the release of inflammatory molecules. Promotes reorganization of the actin cytoskeleton and actin polymerization, formation of podosomes and cell protrusions. Inhibits TP73-mediated transcription activation and TP73-mediated apoptosis. Phosphorylates CBL in response to activation of immunoglobulin gamma Fc region receptors. Phosphorylates ADAM15, BCR, ELMO1, FCGR2A, GAB1, GAB2, RAPGEF1, STAT5B, TP73, VAV1 and WAS. This chain is Tyrosine-protein kinase HCK (HCK), found in Macaca fascicularis (Crab-eating macaque).